The sequence spans 59 residues: Cecropin-A (59 aa).

The first 23 residues, 1 to 23, serve as a signal peptide directing secretion; that stretch reads MNFNKLFVIVLLAALAFFGQAEA. Leucine amide is present on Leu-57.

This sequence belongs to the cecropin family.

The protein localises to the secreted. Cecropins have lytic and antibacterial activity against several Gram-positive and Gram-negative bacteria. The sequence is that of Cecropin-A (CECA) from Culex pipiens pipiens (Northern house mosquito).